Reading from the N-terminus, the 181-residue chain is dCTP deaminase (181 aa).

DCTP-binding positions include arginine 100–arginine 105 and aspartate 116. Glutamate 126 acts as the Proton donor/acceptor in catalysis. Residues tyrosine 158 and glutamine 165 each coordinate dCTP. The tract at residues glycine 160–phenylalanine 181 is disordered.

This sequence belongs to the dCTP deaminase family. Homotrimer.

The catalysed reaction is dCTP + H2O + H(+) = dUTP + NH4(+). It participates in pyrimidine metabolism; dUMP biosynthesis; dUMP from dCTP (dUTP route): step 1/2. In terms of biological role, catalyzes the deamination of dCTP to dUTP. The protein is dCTP deaminase of Desulfurococcus amylolyticus (strain DSM 18924 / JCM 16383 / VKM B-2413 / 1221n) (Desulfurococcus kamchatkensis).